Reading from the N-terminus, the 567-residue chain is Proline--tRNA ligase (567 aa).

Belongs to the class-II aminoacyl-tRNA synthetase family. ProS type 1 subfamily. In terms of assembly, homodimer.

It is found in the cytoplasm. It catalyses the reaction tRNA(Pro) + L-proline + ATP = L-prolyl-tRNA(Pro) + AMP + diphosphate. Its function is as follows. Catalyzes the attachment of proline to tRNA(Pro) in a two-step reaction: proline is first activated by ATP to form Pro-AMP and then transferred to the acceptor end of tRNA(Pro). As ProRS can inadvertently accommodate and process non-cognate amino acids such as alanine and cysteine, to avoid such errors it has two additional distinct editing activities against alanine. One activity is designated as 'pretransfer' editing and involves the tRNA(Pro)-independent hydrolysis of activated Ala-AMP. The other activity is designated 'posttransfer' editing and involves deacylation of mischarged Ala-tRNA(Pro). The misacylated Cys-tRNA(Pro) is not edited by ProRS. This chain is Proline--tRNA ligase, found in Staphylococcus epidermidis (strain ATCC 35984 / DSM 28319 / BCRC 17069 / CCUG 31568 / BM 3577 / RP62A).